The primary structure comprises 294 residues: MSHEKSESCLQEKKHSSSFERFHDGTSLENNLLQNLKLSSQRVLEIAQKKGRSKCPKCNSSRMFYCYTCFVPVESVPSDEIPVVKLPLKIDIIKHPNETDGKSTAVHAKLLAHEDVTVYTYPCVPQYQDQKHEVVLVFPGPDSVSLSDSLLYIRGSGDMQNDSSCEPSLKRPKCSQQYDKSKNEGVEEKKPMHFLKKLIFIDSTWNQTNKIISDERLQGLQQVELMERKTCFWRHQKGTPNTYLSTIEAIYYFMIDYHTIILQKDYKGEYDDLLFFFSFMYRIINDAKKSAGKL.

The disordered stretch occupies residues 158–185 (DMQNDSSCEPSLKRPKCSQQYDKSKNEG). A DXTW motif is present at residues 202-205 (DSTW).

The protein belongs to the TDD superfamily. DTWD1 family.

The protein localises to the nucleus. The catalysed reaction is a uridine in tRNA + S-adenosyl-L-methionine = a 3-[(3S)-3-amino-3-carboxypropyl]uridine in tRNA + S-methyl-5'-thioadenosine + H(+). Functionally, catalyzes the formation of 3-(3-amino-3-carboxypropyl)uridine (acp3U) at position 20 in the D-loop of several cytoplasmic tRNAs (acp3U(20)). This Xenopus tropicalis (Western clawed frog) protein is tRNA-uridine aminocarboxypropyltransferase 1.